Consider the following 293-residue polypeptide: Chorion protein S36 (293 aa).

The N-terminal stretch at 1-20 (MQLGLWFGLFAVAAAPLVSA) is a signal peptide. The segment covering 235 to 253 (QSYGQPQAYNQPQAYSQPQ) has biased composition (polar residues). The interval 235–293 (QSYGQPQAYNQPQAYSQPQSYGNSGSSGAGNSGPSSDSYAAGAETPLYASPAPYGSPSY) is disordered.

It belongs to the chorion protein S36 family.

It is found in the secreted. Functionally, chorion membrane (egg shell) protein; protects the egg from the environment. This chain is Chorion protein S36 (Cp36), found in Drosophila virilis (Fruit fly).